The sequence spans 1689 residues: Cullin-7 (1689 aa).

The 74-residue stretch at 349 to 422 (RASFASFNTY…HWHMLEILGF (74 aa)) folds into the CPH domain. The 180-residue stretch at 793–972 (PIQIPFFDVF…HTRLFYMVRA (180 aa)) folds into the DOC domain. Basic and acidic residues predominate over residues 1321-1337 (VAHEDSGREDKSKKEEA). Positions 1321–1371 (VAHEDSGREDKSKKEEAIGEAAAVAMAEEEDQGKKEEGEEEGEGEDEEEER) are disordered. The span at 1358 to 1370 (GEEEGEGEDEEEE) shows a compositional bias: acidic residues. A Glycyl lysine isopeptide (Lys-Gly) (interchain with G-Cter in NEDD8) cross-link involves residue lysine 1567.

It belongs to the cullin family. In terms of assembly, component of the 3M complex, composed of core components CUL7, CCDC8 and OBSL1. Component of the Cul7-RING(FBXW8) complex consisting of CUL7, RBX1, SKP1 and FBXW8. Within the Cul7-RING(FBXW8) complex interacts with FBXW8 and RBX1, but not with SKP1. Interacts with CUL1 (via the C-terminal domain); the interaction seems to be mediated by FBXW8; it is likely specific to FBXW8, but not other F-box proteins. Interacts (via the CPH domain) with p53/TP53; the interaction preferentially involves tetrameric and dimeric p53/TP53; this interaction recruits p53/TP53 for ubiquitination by neddylated CUL1-RBX1. The CUL7-CUL9 heterodimer seems to interact specifically with p53/TP53. Interacts with FBXW8; interaction is mutually exclusive of binding to CUL9 or p53/TP53. Interacts with CUL9; leading to inhibited CUL9 activity. Interacts with OBSL1. Interacts (as part of the 3M complex) with HDAC4 and HDAC5; it is negatively regulated by ANKRA2.

The protein localises to the cytoplasm. Its subcellular location is the cytoskeleton. It localises to the microtubule organizing center. The protein resides in the centrosome. It is found in the perinuclear region. The protein localises to the golgi apparatus. It functions in the pathway protein modification; protein ubiquitination. Functionally, core component of the 3M and Cul7-RING(FBXW8) complexes, which mediate the ubiquitination and subsequent proteasomal degradation of target proteins. Core component of the 3M complex, a complex required to regulate microtubule dynamics and genome integrity. It is unclear how the 3M complex regulates microtubules, it could act by controlling the level of a microtubule stabilizer. The Cul7-RING(FBXW8) complex alone lacks ubiquitination activity and does not promote polyubiquitination and proteasomal degradation of p53/TP53. However it mediates recruitment of p53/TP53 for ubiquitination by neddylated CUL1-RBX1. Interaction with CUL9 is required to inhibit CUL9 activity and ubiquitination of BIRC5. The Cul7-RING(FBXW8) complex also mediates ubiquitination and consequent degradation of target proteins such as GORASP1, IRS1 and MAP4K1/HPK1. Ubiquitination of GORASP1 regulates Golgi morphogenesis and dendrite patterning in brain. Mediates ubiquitination and degradation of IRS1 in a mTOR-dependent manner: the Cul7-RING(FBXW8) complex recognizes and binds IRS1 previously phosphorylated by S6 kinase (RPS6KB1 or RPS6KB2). The Cul7-RING(FBXW8) complex also mediates ubiquitination of MAP4K1/HPK1: recognizes and binds autophosphorylated MAP4K1/HPK1, leading to its degradation, thereby affecting cell proliferation and differentiation. Acts as a regulator in trophoblast cell epithelial-mesenchymal transition and placental development. While the Cul7-RING(FBXW8) and the 3M complexes are associated and involved in common processes, CUL7 and the Cul7-RING(FBXW8) complex may have additional functions. Probably plays a role in the degradation of proteins involved in endothelial proliferation and/or differentiation. This is Cullin-7 (Cul7) from Mus musculus (Mouse).